An 86-amino-acid polypeptide reads, in one-letter code: Large ribosomal subunit protein bL31 (86 aa).

Residues 65-86 (YGMGSADSATSKETKESKKSDK) form a disordered region. The segment covering 74–86 (TSKETKESKKSDK) has biased composition (basic and acidic residues).

This sequence belongs to the bacterial ribosomal protein bL31 family. Type A subfamily. In terms of assembly, part of the 50S ribosomal subunit.

Functionally, binds the 23S rRNA. This chain is Large ribosomal subunit protein bL31, found in Prochlorococcus marinus subsp. pastoris (strain CCMP1986 / NIES-2087 / MED4).